A 248-amino-acid chain; its full sequence is Anamorsin homolog (248 aa).

Residues 4-129 (FKGLQKSLYI…ETGSSARLSF (126 aa)) are N-terminal SAM-like domain. Positions 130–161 (AKKNANAANVWKISGDDEELIDEEELLDEEDK) are linker. Residues C172, C181, C184, and C186 each coordinate [2Fe-2S] cluster. A fe-S binding site A region spans residues 172–186 (CSTTGKRKACKNCSC). [4Fe-4S] cluster contacts are provided by C209, C212, C220, and C223. 2 short sequence motifs (cx2C motif) span residues 209–212 (CGNC) and 220–223 (CSTC). The segment at 209-223 (CGNCYLGDAFRCSTC) is fe-S binding site B.

It belongs to the anamorsin family. Monomer. It depends on [2Fe-2S] cluster as a cofactor. [4Fe-4S] cluster is required as a cofactor.

The protein localises to the cytoplasm. The protein resides in the mitochondrion intermembrane space. Component of the cytosolic iron-sulfur (Fe-S) protein assembly (CIA) machinery. Required for the maturation of extramitochondrial Fe-S proteins. Part of an electron transfer chain functioning in an early step of cytosolic Fe-S biogenesis, facilitating the de novo assembly of a [4Fe-4S] cluster on the cytosolic Fe-S scaffold complex. Electrons are transferred from NADPH via a FAD- and FMN-containing diflavin oxidoreductase. Together with the diflavin oxidoreductase, also required for the assembly of the diferric tyrosyl radical cofactor of ribonucleotide reductase (RNR), probably by providing electrons for reduction during radical cofactor maturation in the catalytic small subunit. This Drosophila sechellia (Fruit fly) protein is Anamorsin homolog.